The following is a 383-amino-acid chain: Chaperone protein DnaJ (383 aa).

A J domain is found at 5-69; sequence DYYDILGVSK…QKRAQYDQFG (65 aa). A CR-type zinc finger spans residues 138–222; that stretch reads GKTTTIKYDR…CHGAGHVHER (85 aa). Zn(2+) contacts are provided by Cys151, Cys154, Cys168, Cys171, Cys194, Cys197, Cys210, and Cys213. CXXCXGXG motif repeat units follow at residues 151 to 158, 168 to 175, 194 to 201, and 210 to 217; these read CKTCHGTG, CPRCHGAG, CPECNGTG, and CDTCHGAG.

Belongs to the DnaJ family. In terms of assembly, homodimer. It depends on Zn(2+) as a cofactor.

It is found in the cytoplasm. Functionally, participates actively in the response to hyperosmotic and heat shock by preventing the aggregation of stress-denatured proteins and by disaggregating proteins, also in an autonomous, DnaK-independent fashion. Unfolded proteins bind initially to DnaJ; upon interaction with the DnaJ-bound protein, DnaK hydrolyzes its bound ATP, resulting in the formation of a stable complex. GrpE releases ADP from DnaK; ATP binding to DnaK triggers the release of the substrate protein, thus completing the reaction cycle. Several rounds of ATP-dependent interactions between DnaJ, DnaK and GrpE are required for fully efficient folding. Also involved, together with DnaK and GrpE, in the DNA replication of plasmids through activation of initiation proteins. In Limosilactobacillus reuteri (strain DSM 20016) (Lactobacillus reuteri), this protein is Chaperone protein DnaJ.